Here is a 329-residue protein sequence, read N- to C-terminus: Carbohydrate sulfotransferase chst-1 (329 aa).

Over 1–3 (MLK) the chain is Cytoplasmic. A helical; Signal-anchor for type II membrane protein membrane pass occupies residues 4–23 (WFIISCCLLTAISYSTYYLF). The Lumenal portion of the chain corresponds to 24 to 329 (TSNSWIKTVK…FDFDTTFINS (306 aa)). 3'-phosphoadenylyl sulfate is bound by residues 91-97 (KKSMSTL) and 157-165 (RDPIARFIS).

It belongs to the sulfotransferase 2 family. As to expression, highly expressed in the head and tail of hermaphrodites, in particular in amphid and phasmid sheath cells.

It is found in the golgi apparatus membrane. It carries out the reaction chondroitin beta-D-glucuronate + n 3'-phosphoadenylyl sulfate = chondroitin 4'-sulfate + n adenosine 3',5'-bisphosphate + n H(+). In terms of biological role, catalyzes the transfer of sulfate to position 4 of non-reducing N-acetylgalactosamine (GalNAc) residue of chondroitin. This Caenorhabditis elegans protein is Carbohydrate sulfotransferase chst-1.